Consider the following 129-residue polypeptide: Fluoride-specific ion channel FluC 1 (129 aa).

3 helical membrane passes run 43–63 (ASLLLGLVAGAAGAGAPPAWV), 68–88 (VVSLVGTGLCGALSTYSTFSY), and 100–120 (LLAAANVAGSVLAAFGAAALG). Residues glycine 78 and serine 81 each contribute to the Na(+) site.

This sequence belongs to the fluoride channel Fluc/FEX (TC 1.A.43) family.

It localises to the cell membrane. The enzyme catalyses fluoride(in) = fluoride(out). With respect to regulation, na(+) is not transported, but it plays an essential structural role and its presence is essential for fluoride channel function. Functionally, fluoride-specific ion channel. Important for reducing fluoride concentration in the cell, thus reducing its toxicity. The sequence is that of Fluoride-specific ion channel FluC 1 from Frankia casuarinae (strain DSM 45818 / CECT 9043 / HFP020203 / CcI3).